Consider the following 259-residue polypeptide: Probable kinetochore protein spc25 (259 aa).

Polar residues predominate over residues 1 to 20 (MSRKSVMSSTFEPSLSTSRQ). The interval 1 to 25 (MSRKSVMSSTFEPSLSTSRQPLGPS) is disordered. Positions 59 to 162 (RKRVLEERNQ…HAAQLEAQAR (104 aa)) form a coiled coil.

This sequence belongs to the SPC25 family. As to quaternary structure, component of the NDC80 complex, which consists of kpr-1/ndc80, kpr-2/nuf2, kpr-3/spc24 and kpr-4/spc25.

The protein localises to the nucleus. The protein resides in the chromosome. Its subcellular location is the centromere. It localises to the kinetochore. Its function is as follows. Acts as a component of the essential kinetochore-associated NDC80 complex, which is required for chromosome segregation and spindle checkpoint activity. The protein is Probable kinetochore protein spc25 (kpr-4) of Neurospora crassa (strain ATCC 24698 / 74-OR23-1A / CBS 708.71 / DSM 1257 / FGSC 987).